The following is a 182-amino-acid chain: Ribosome-recycling factor (182 aa).

This sequence belongs to the RRF family.

It is found in the cytoplasm. Its function is as follows. Responsible for the release of ribosomes from messenger RNA at the termination of protein biosynthesis. May increase the efficiency of translation by recycling ribosomes from one round of translation to another. The sequence is that of Ribosome-recycling factor from Picosynechococcus sp. (strain ATCC 27264 / PCC 7002 / PR-6) (Agmenellum quadruplicatum).